The chain runs to 210 residues: Phosphoenolpyruvate guanylyltransferase (210 aa).

T130, G146, and S149 together coordinate phosphoenolpyruvate.

The protein belongs to the CofC family.

The catalysed reaction is phosphoenolpyruvate + GTP + H(+) = enolpyruvoyl-2-diphospho-5'-guanosine + diphosphate. It participates in cofactor biosynthesis; coenzyme F420 biosynthesis. Guanylyltransferase that catalyzes the activation of phosphoenolpyruvate (PEP) as enolpyruvoyl-2-diphospho-5'-guanosine, via the condensation of PEP with GTP. It is involved in the biosynthesis of coenzyme F420, a hydride carrier cofactor. This is Phosphoenolpyruvate guanylyltransferase from Roseiflexus castenholzii (strain DSM 13941 / HLO8).